The following is a 98-amino-acid chain: NADH-ubiquinone oxidoreductase chain 4L (98 aa).

3 consecutive transmembrane segments (helical) span residues 2–22 (PSIS…MLIF), 29–49 (SLLC…LTIL), and 61–81 (ILLL…LVTV).

Belongs to the complex I subunit 4L family. Core subunit of respiratory chain NADH dehydrogenase (Complex I) which is composed of 45 different subunits.

The protein resides in the mitochondrion inner membrane. It catalyses the reaction a ubiquinone + NADH + 5 H(+)(in) = a ubiquinol + NAD(+) + 4 H(+)(out). Core subunit of the mitochondrial membrane respiratory chain NADH dehydrogenase (Complex I) which catalyzes electron transfer from NADH through the respiratory chain, using ubiquinone as an electron acceptor. Part of the enzyme membrane arm which is embedded in the lipid bilayer and involved in proton translocation. This chain is NADH-ubiquinone oxidoreductase chain 4L (MT-ND4L), found in Lemur catta (Ring-tailed lemur).